Here is a 702-residue protein sequence, read N- to C-terminus: Ribosomal RNA large subunit methyltransferase K/L (702 aa).

The 112-residue stretch at 43 to 154 (LVYQSLMWSR…KETASIALDL (112 aa)) folds into the THUMP domain.

This sequence belongs to the methyltransferase superfamily. RlmKL family.

The protein localises to the cytoplasm. It carries out the reaction guanosine(2445) in 23S rRNA + S-adenosyl-L-methionine = N(2)-methylguanosine(2445) in 23S rRNA + S-adenosyl-L-homocysteine + H(+). It catalyses the reaction guanosine(2069) in 23S rRNA + S-adenosyl-L-methionine = N(2)-methylguanosine(2069) in 23S rRNA + S-adenosyl-L-homocysteine + H(+). Its function is as follows. Specifically methylates the guanine in position 2445 (m2G2445) and the guanine in position 2069 (m7G2069) of 23S rRNA. This Escherichia coli O6:H1 (strain CFT073 / ATCC 700928 / UPEC) protein is Ribosomal RNA large subunit methyltransferase K/L.